The following is a 161-amino-acid chain: Nucleotide-binding protein PBPRA2024 (161 aa).

Belongs to the YajQ family.

Nucleotide-binding protein. This is Nucleotide-binding protein PBPRA2024 from Photobacterium profundum (strain SS9).